Here is a 522-residue protein sequence, read N- to C-terminus: Ribonuclease Y (522 aa).

A helical transmembrane segment spans residues 2–22; that stretch reads WVEILVGSSAAIISGAAGYLL. A KH domain is found at 212–278; the sequence is LINTVSIPSE…TKVIELLVED (67 aa). One can recognise an HD domain in the interval 338 to 431; the sequence is ALGHSLEVAH…VCAADTLSAA (94 aa).

Belongs to the RNase Y family.

The protein localises to the cell membrane. Functionally, endoribonuclease that initiates mRNA decay. This chain is Ribonuclease Y, found in Nitratiruptor sp. (strain SB155-2).